The chain runs to 349 residues: ATPase GET3 (349 aa).

26 to 33 (KGGVGKTT) contacts ATP. D57 is a catalytic residue. Residues E240 and N267 each coordinate ATP. The Zn(2+) site is built by C280 and C283.

The protein belongs to the arsA ATPase family. Homodimer. Component of the Golgi to ER traffic (GET) complex, which is composed of GET1, GET2 and GET3. Within the complex, GET1 and GET2 form a heterotetramer which is stabilized by phosphatidylinositol binding and which binds to the GET3 homodimer. Interacts with the chloride channel protein GEF1.

It localises to the cytoplasm. The protein localises to the endoplasmic reticulum. Its subcellular location is the golgi apparatus. Functionally, ATPase required for the post-translational delivery of tail-anchored (TA) proteins to the endoplasmic reticulum. Recognizes and selectively binds the transmembrane domain of TA proteins in the cytosol. This complex then targets to the endoplasmic reticulum by membrane-bound receptors GET1 and GET2, where the tail-anchored protein is released for insertion. This process is regulated by ATP binding and hydrolysis. ATP binding drives the homodimer towards the closed dimer state, facilitating recognition of newly synthesized TA membrane proteins. ATP hydrolysis is required for insertion. Subsequently, the homodimer reverts towards the open dimer state, lowering its affinity for the GET1-GET2 receptor, and returning it to the cytosol to initiate a new round of targeting. Cooperates with the HDEL receptor ERD2 to mediate the ATP-dependent retrieval of resident ER proteins that contain a C-terminal H-D-E-L retention signal from the Golgi to the ER. Involved in low-level resistance to the oxyanions arsenite and arsenate, and in heat tolerance. The sequence is that of ATPase GET3 from Lachancea thermotolerans (strain ATCC 56472 / CBS 6340 / NRRL Y-8284) (Yeast).